The following is a 261-amino-acid chain: 5'-nucleotidase SurE (261 aa).

Residues D8, D9, S43, and N96 each contribute to the a divalent metal cation site.

The protein belongs to the SurE nucleotidase family. Requires a divalent metal cation as cofactor.

The protein localises to the cytoplasm. The enzyme catalyses a ribonucleoside 5'-phosphate + H2O = a ribonucleoside + phosphate. Nucleotidase that shows phosphatase activity on nucleoside 5'-monophosphates. The polypeptide is 5'-nucleotidase SurE (Cereibacter sphaeroides (strain ATCC 17025 / ATH 2.4.3) (Rhodobacter sphaeroides)).